The primary structure comprises 353 residues: DNA replication and repair protein RecF (353 aa).

Residue 30–37 (GANGQGKT) coordinates ATP.

The protein belongs to the RecF family.

It is found in the cytoplasm. The RecF protein is involved in DNA metabolism; it is required for DNA replication and normal SOS inducibility. RecF binds preferentially to single-stranded, linear DNA. It also seems to bind ATP. The sequence is that of DNA replication and repair protein RecF from Carboxydothermus hydrogenoformans (strain ATCC BAA-161 / DSM 6008 / Z-2901).